Consider the following 346-residue polypeptide: C5a anaphylatoxin chemotactic receptor 1 (346 aa).

At 1 to 33 the chain is on the extracellular side; that stretch reads MDDNNSDWTSYDFGNDTIPSPNEISLSHIGTRH. Residues asparagine 4 and asparagine 15 are each glycosylated (N-linked (GlcNAc...) asparagine). A helical transmembrane segment spans residues 34–60; the sequence is WITLVCYGIVFLLGVPGNALVVWVTGF. The Cytoplasmic portion of the chain corresponds to 61-65; it reads RMPNS. Residues 66–89 traverse the membrane as a helical segment; that stretch reads VNAQWFLNLAIADLLCCLSLPILM. At 90 to 106 the chain is on the extracellular side; it reads VPLAQDQHWPFGALACK. The cysteines at positions 105 and 183 are disulfide-linked. Residues 107–128 form a helical membrane-spanning segment; that stretch reads LFSGIFYMMMYCSVLLLVVISL. Residues 129 to 149 are Cytoplasmic-facing; that stretch reads DRFLLVTKPVWCQNNRQPRQA. The helical transmembrane segment at 150–170 threads the bilayer; the sequence is RILCFIIWILGLLGSSPYFAH. Over 171–194 the chain is Extracellular; the sequence is MEIQHHSETKTVCTGSYSSLGHAW. Residues 195–220 form a helical membrane-spanning segment; sequence AITIIRSFLFFLLPFLIICISHWKVY. Over 221–238 the chain is Cytoplasmic; the sequence is HMTSSGRRQRDKSSRTLR. Residues 239 to 261 traverse the membrane as a helical segment; sequence VILALVLGFFLCWTPLHIVDLLI. Over 262–279 the chain is Extracellular; it reads LVSDQPSERFEVNLNLAH. The chain crosses the membrane as a helical span at residues 280–300; the sequence is VLTLCLAYINSCLNPLLYVCL. The Cytoplasmic segment spans residues 301–346; sequence GRGFKENLISSLRSVLHFASEAPTHGPSMTTNSKSTTDGVFREKPV. A disordered region spans residues 323–346; it reads PTHGPSMTTNSKSTTDGVFREKPV. Positions 327–338 are enriched in polar residues; it reads PSMTTNSKSTTD.

This sequence belongs to the G-protein coupled receptor 1 family.

The protein resides in the cell membrane. In terms of biological role, receptor for the chemotactic and inflammatory peptide anaphylatoxin C5a. This receptor stimulates chemotaxis, granule enzyme release and superoxide anion production. This Danio rerio (Zebrafish) protein is C5a anaphylatoxin chemotactic receptor 1 (c5ar1).